The sequence spans 261 residues: Transmembrane protein 106A (261 aa).

Residues 95–115 (VFLAVSICLVTSSLIIFFLFP) form a helical membrane-spanning segment.

It belongs to the TMEM106 family.

It localises to the cell membrane. Its function is as follows. Activates macrophages and polarizes them into M1-like macrophages through the activation of the MAPK and NF-kappaB signaling pathway. Upon activation, up-regulates the expression of CD80, CD86, CD69 and MHC II on macrophages, and induces the release of pro-inflammatory cytokines such as TNF, IL1B, IL6, CCL2 and nitric oxide. May play a role in inhibition of proliferation and migration. The chain is Transmembrane protein 106A (TMEM106A) from Bos taurus (Bovine).